The chain runs to 413 residues: Histidine--tRNA ligase (413 aa).

The protein belongs to the class-II aminoacyl-tRNA synthetase family. In terms of assembly, homodimer.

The protein localises to the cytoplasm. It carries out the reaction tRNA(His) + L-histidine + ATP = L-histidyl-tRNA(His) + AMP + diphosphate + H(+). The sequence is that of Histidine--tRNA ligase from Ehrlichia chaffeensis (strain ATCC CRL-10679 / Arkansas).